Consider the following 344-residue polypeptide: Pyruvate dehydrogenase E1 component subunit alpha (344 aa).

The pyruvate site is built by histidine 55, tyrosine 81, arginine 82, alanine 130, isoleucine 132, aspartate 168, glycine 169, and asparagine 197. Tyrosine 81, arginine 82, alanine 130, isoleucine 132, aspartate 168, glycine 169, asparagine 197, and histidine 266 together coordinate thiamine diphosphate. Aspartate 168 contributes to the Mg(2+) binding site. Residue asparagine 197 participates in Mg(2+) binding.

Heterodimer of an alpha and a beta chain. Thiamine diphosphate is required as a cofactor. Requires Mg(2+) as cofactor.

It localises to the plastid. Its subcellular location is the chloroplast. It catalyses the reaction N(6)-[(R)-lipoyl]-L-lysyl-[protein] + pyruvate + H(+) = N(6)-[(R)-S(8)-acetyldihydrolipoyl]-L-lysyl-[protein] + CO2. Functionally, the pyruvate dehydrogenase complex catalyzes the overall conversion of pyruvate to acetyl-CoA and CO(2). It contains multiple copies of three enzymatic components: pyruvate dehydrogenase (E1), dihydrolipoamide acetyltransferase (E2) and lipoamide dehydrogenase (E3). This chain is Pyruvate dehydrogenase E1 component subunit alpha (pdhA), found in Porphyra purpurea (Red seaweed).